The sequence spans 708 residues: MTMDEQQSQAVAPVYVGGFLARYDQSPDEAELLLPRDVVEHWLHAQGQGQPSLSVALPLNINHDDTAVVGHVAAMQSVRDGLFCLGCVTSPRFLEIVRRASEKSELVSRGPVSPLQPDKVVEFLSGSYAGLSLSSRRCDDVEAATSLSGSETTPFKHVALCSVGRRRGTLAVYGRDPEWVTQRFPDLTAADRDGLRAQWQRCGSTAVDASGDPFRSDSYGLLGNSVDALYIRERLPKLRYDKQLVGVTERESYVKASVSPEAACDIKAASAERSGDSRSQAATPAAGARVPSSSPSPPVEPPSPVQPPALPASPSVLPAESPPSLSPSEPAEAASMSHPLSAAVPAATAPPGATVAGASPAVSSLAWPHDGVYLPKDAFFSLLGASRSAVPVMYPGAVAAPPSASPAPLPLPSYPASYGAPVVGYDQLAARHFADYVDPHYPGWGRRYEPAPSLHPSYPVPPPPSPAYYRRRDSPGGMDEPPSGWERYDGGHRGQSQKQHRHGGSGGHNKRRKETAAASSSSSDEDLSFPGEAEHGRARKRLKSHVNSDGGSGGHAGSNQQQQQRYDELRDAIHELKRDLFAARQSSTLLSAALPSAASSSPTTTTVCTPTGELTSGGGETPTALLSGGAKVAERAQAGVVNASCRLATASGSEAATAGPSTAGSSSCPASVVLAAAAAQAAAASQSPPKDMVDLNRRIFVAALNKLE.

Active-site charge relay system residues include H63, S132, and H157. Disordered regions lie at residues 269-339, 455-565, and 593-619; these read ASAE…MSHP, HPSY…QQQR, and ALPS…SGGG. Low complexity predominate over residues 284–293; sequence PAAGARVPSS. Residues 294–311 show a composition bias toward pro residues; it reads SPSPPVEPPSPVQPPALP. Positions 326-339 are enriched in low complexity; sequence SPSEPAEAASMSHP. The interval 333-352 is interaction with pAP; sequence AASMSHPLSAAVPAATAPPG. Basic residues predominate over residues 498–513; that stretch reads KQHRHGGSGGHNKRRK. Short sequence motifs (nuclear localization signal) lie at residues 510 to 515 and 537 to 543; these read KRRKET and RARKRLK. Residues 593-611 show a composition bias toward low complexity; that stretch reads ALPSAASSSPTTTTVCTPT. Positions 688 to 708 are interaction with major capsid protein; the sequence is PPKDMVDLNRRIFVAALNKLE.

It belongs to the herpesviridae capsid scaffolding protein family. Homomultimer. Interacts with major capsid protein. As to quaternary structure, exists in a monomer-dimer equilibrium with the dimer being the active species. In terms of processing, capsid scaffolding protein is cleaved by assemblin after formation of the spherical procapsid. As a result, the capsid obtains its mature, icosahedral shape. Cleavages occur at two or more sites: release (R-site) and maturation (M-site).

Its subcellular location is the host cytoplasm. The protein resides in the host nucleus. It carries out the reaction Cleaves -Ala-|-Ser- and -Ala-|-Ala- bonds in the scaffold protein.. Acts as a scaffold protein by binding major capsid protein in the cytoplasm, inducing the nuclear localization of both proteins. Multimerizes in the nucleus such as major capsid protein forms the icosahedral T=16 capsid. Autocatalytic cleavage releases the assembly protein, and subsequently abolishes interaction with major capsid protein. Cleavages products are evicted from the capsid before or during DNA packaging. Its function is as follows. Protease that plays an essential role in virion assembly within the nucleus. Catalyzes the cleavage of the assembly protein after formation of the spherical procapsid. By that cleavage, the capsid matures and gains its icosahedral shape. The cleavage sites seem to include -Ala-Ser-, -Ala-Ala-, as well as Ala-Thr bonds. Assemblin and cleavages products are evicted from the capsid before or during DNA packaging. Functionally, plays a major role in capsid assembly. Acts as a scaffold protein by binding major capsid protein. Multimerizes in the nucleus such as major capsid protein forms the icosahedral T=16 capsid. Cleaved by assemblin after capsid completion. The cleavages products are evicted from the capsid before or during DNA packaging. This Homo sapiens (Human) protein is Capsid scaffolding protein (UL80).